Consider the following 275-residue polypeptide: MPIKVYKPTTPGRRNMSVLTYEEITKEAPEKSLIEPLKKHAGRNNRGVITTRHRGGGNKRFYRIIDFRRDKWGIPAKVAAIEYDPNRTAFIALLHYADGEKRYILAPLGLKVGDIVQSGPGAPIRVGNALPLREIPLGTQVHNVELYPGRGGQLVRAAGAVAQVVAKIDNYVHLRLPSGEIRMVHADCMATIGQVGNLDHQNVSIGKAGRKRHMGWRPAVRGSAMTPRDHPHGGGEGKAPRGMPPKTPWGKPALGKRTRRNKKSDRFIIRRRYEA.

Residues 221–275 (RGSAMTPRDHPHGGGEGKAPRGMPPKTPWGKPALGKRTRRNKKSDRFIIRRRYEA) are disordered. Residues 227–239 (PRDHPHGGGEGKA) show a composition bias toward basic and acidic residues. Residues 254-263 (LGKRTRRNKK) show a composition bias toward basic residues. Positions 264–275 (SDRFIIRRRYEA) are enriched in basic and acidic residues.

It belongs to the universal ribosomal protein uL2 family. As to quaternary structure, part of the 50S ribosomal subunit. Forms a bridge to the 30S subunit in the 70S ribosome.

Functionally, one of the primary rRNA binding proteins. Required for association of the 30S and 50S subunits to form the 70S ribosome, for tRNA binding and peptide bond formation. It has been suggested to have peptidyltransferase activity; this is somewhat controversial. Makes several contacts with the 16S rRNA in the 70S ribosome. The polypeptide is Large ribosomal subunit protein uL2 (Thermomicrobium roseum (strain ATCC 27502 / DSM 5159 / P-2)).